The following is a 122-amino-acid chain: Large ribosomal subunit protein uL14 (122 aa).

The protein belongs to the universal ribosomal protein uL14 family. Part of the 50S ribosomal subunit. Forms a cluster with proteins L3 and L19. In the 70S ribosome, L14 and L19 interact and together make contacts with the 16S rRNA in bridges B5 and B8.

In terms of biological role, binds to 23S rRNA. Forms part of two intersubunit bridges in the 70S ribosome. This chain is Large ribosomal subunit protein uL14, found in Nitratidesulfovibrio vulgaris (strain ATCC 29579 / DSM 644 / CCUG 34227 / NCIMB 8303 / VKM B-1760 / Hildenborough) (Desulfovibrio vulgaris).